Reading from the N-terminus, the 89-residue chain is MSMFGIGKNNQTINPQNIAMAEQEVEMMSDIFNRLVMTCHKKCISPKYYEADLTKGESVCIDRCVSKYFEANQSLSQHMQKRGQENPTP.

Positions 39-64 (CHKKCISPKYYEADLTKGESVCIDRC) match the Twin CX3C motif motif. Intrachain disulfides connect Cys39/Cys64 and Cys43/Cys60.

It belongs to the small Tim family. As to quaternary structure, heterohexamer; composed of 3 copies of TIM9 and 3 copies of TIM10, named soluble 70 kDa complex. Associates directly with the TIM22 complex, whose core is composed of TIM22 and TIM54. Interacts with the transmembrane regions of multi-pass transmembrane proteins in transit.

The protein localises to the mitochondrion inner membrane. Its function is as follows. Mitochondrial intermembrane chaperone that participates in the import and insertion of multi-pass transmembrane proteins into the mitochondrial inner membrane. Also required for the transfer of beta-barrel precursors from the TOM complex to the sorting and assembly machinery (SAM complex) of the outer membrane. Acts as a chaperone-like protein that protects the hydrophobic precursors from aggregation and guide them through the mitochondrial intermembrane space. This Schizosaccharomyces pombe (strain 972 / ATCC 24843) (Fission yeast) protein is Mitochondrial import inner membrane translocase subunit tim10 (tim10).